The primary structure comprises 954 residues: Patched domain-containing protein 3 (954 aa).

A compositionally biased stretch (basic and acidic residues) spans Met-1 to Lys-20. Positions Met-1–Glu-103 are disordered. Pro residues predominate over residues Gln-42–Ser-57. Over residues Glu-90 to Pro-102 the composition is skewed to acidic residues. A helical transmembrane segment spans residues Trp-139 to Leu-159. N-linked (GlcNAc...) asparagine glycosylation is found at Asn-192, Asn-275, and Asn-279. The next 7 helical transmembrane spans lie at Leu-297–Leu-317, Val-383–Phe-403, Phe-423–Ile-443, Ser-447–His-467, Ala-486–Met-506, Gly-520–Leu-540, and Tyr-603–Val-623. Residues Val-383–Leu-540 form the SSD domain. N-linked (GlcNAc...) asparagine glycosylation is found at Asn-678, Asn-692, and Asn-737. The next 5 membrane-spanning stretches (helical) occupy residues Val-804–Cys-824, Leu-826–Trp-846, Leu-858–Ser-878, Leu-894–Ala-914, and Ile-927–Leu-947.

Belongs to the patched family. As to expression, expressed in germ cells of the testis (at protein level). Detected in blood lymph, colon, small intestine, ovary, testis, prostate, thymus and spleen with highest levels in testis.

It localises to the cell projection. It is found in the cilium. The protein resides in the flagellum membrane. The protein localises to the endoplasmic reticulum membrane. Its function is as follows. May play a role in sperm development or sperm function. However, does not appear to have an essential role in spermatogenesis or male fertility. This Homo sapiens (Human) protein is Patched domain-containing protein 3 (PTCHD3).